Consider the following 246-residue polypeptide: MRRRPAQLTATKLADEEVPELTLVPDGVSRWTGADLDALRNAARRGGAEAAQQDLERKLCRTIDILGARSQQAQEINTVLTSVARLRENSTFRLYLLTQNHRGVGILKVGVKKLFVTHPVTCGLVEVDPLCVLDFYVDESCQRQGYGKTLYSHMLKAEHVSRPEVLAIDRPSNKLLGFLRKHYGLAAYTPQVNNFVVFHSFFDHTTVSERGKLLRAPSPARALPFSSSTNATAAIGGAKAKNWAPG.

Positions 21-202 (LTLVPDGVSR…NNFVVFHSFF (182 aa)) constitute an N-acetyltransferase domain. Residues 135-148 (FYVD…GYGK) and 172-181 (SNKLLGFLRK) contribute to the acetyl-CoA site.

Belongs to the acetyltransferase ATAT1 family.

It carries out the reaction L-lysyl-[alpha-tubulin] + acetyl-CoA = N(6)-acetyl-L-lysyl-[alpha-tubulin] + CoA + H(+). Specifically acetylates 'Lys-40' in alpha-tubulin on the lumenal side of microtubules. Promotes microtubule destabilization and accelerates microtubule dynamics; this activity may be independent of acetylation activity. Acetylates alpha-tubulin with a slow enzymatic rate, due to a catalytic site that is not optimized for acetyl transfer. Enters the microtubule through each end and diffuses quickly throughout the lumen of microtubules. Acetylates only long/old microtubules because of its slow acetylation rate since it does not have time to act on dynamically unstable microtubules before the enzyme is released. The protein is Alpha-tubulin N-acetyltransferase of Leishmania infantum.